The chain runs to 124 residues: Small ribosomal subunit protein uS12 (124 aa).

The interval 1 to 25 (MATINQLVRKPRQASTYKSASPALD) is disordered.

The protein belongs to the universal ribosomal protein uS12 family. As to quaternary structure, part of the 30S ribosomal subunit. Contacts proteins S8 and S17. May interact with IF1 in the 30S initiation complex.

Functionally, with S4 and S5 plays an important role in translational accuracy. Interacts with and stabilizes bases of the 16S rRNA that are involved in tRNA selection in the A site and with the mRNA backbone. Located at the interface of the 30S and 50S subunits, it traverses the body of the 30S subunit contacting proteins on the other side and probably holding the rRNA structure together. The combined cluster of proteins S8, S12 and S17 appears to hold together the shoulder and platform of the 30S subunit. The sequence is that of Small ribosomal subunit protein uS12 from Xylella fastidiosa (strain 9a5c).